We begin with the raw amino-acid sequence, 586 residues long: U-box domain-containing protein 73 (586 aa).

Residues 21 to 122 (KADMSGLQRS…AAGADDGPTR (102 aa)) are disordered. The span at 50-60 (RSAPTSPLRTP) shows a compositional bias: low complexity. The 77-residue stretch at 182 to 258 (PIPIAHDGTL…SAWCLDHSDL (77 aa)) folds into the U-box domain.

It catalyses the reaction S-ubiquitinyl-[E2 ubiquitin-conjugating enzyme]-L-cysteine + [acceptor protein]-L-lysine = [E2 ubiquitin-conjugating enzyme]-L-cysteine + N(6)-ubiquitinyl-[acceptor protein]-L-lysine.. The protein operates within protein modification; protein ubiquitination. Its function is as follows. Possesses E3 ubiquitin-protein ligase in vitro. The chain is U-box domain-containing protein 73 (PUB73) from Oryza sativa subsp. japonica (Rice).